The sequence spans 227 residues: Inner membrane lipoprotein SadB (227 aa).

A signal peptide spans 1-21 (MHKNGKFIPLLALGFTFFLSG). The N-palmitoyl cysteine moiety is linked to residue Cys-22. Cys-22 carries the S-diacylglycerol cysteine lipid modification. The stretch at 31–68 (VEEMKEQQKEQETKINLLEKQQKEQEAKINLLEKQQAT) forms a coiled coil.

Homotrimer.

Its subcellular location is the cell inner membrane. Required for proper surface expression of the autotransporter adhesin SadA. Could be directly involved in the biogenesis of functionally active SadA. This is Inner membrane lipoprotein SadB from Salmonella typhimurium (strain LT2 / SGSC1412 / ATCC 700720).